Here is a 487-residue protein sequence, read N- to C-terminus: Multiple inositol polyphosphate phosphatase 1 (487 aa).

The N-terminal stretch at methionine 1 to cysteine 30 is a signal peptide. Histidine 89 is a catalytic residue. N-linked (GlcNAc...) asparagine glycosylation is found at asparagine 242 and asparagine 481. The Prevents secretion from ER signature appears at serine 484–leucine 487.

This sequence belongs to the histidine acid phosphatase family. MINPP1 subfamily. N-glycosylated. Widely expressed with highest levels in kidney, liver, cerebellum and placenta.

It is found in the endoplasmic reticulum lumen. The protein resides in the secreted. The protein localises to the cell membrane. It carries out the reaction 1D-myo-inositol hexakisphosphate + H2O = 1D-myo-inositol 1,2,4,5,6-pentakisphosphate + phosphate. The catalysed reaction is 1D-myo-inositol 1,2,4,5,6-pentakisphosphate + H2O = 1D-myo-inositol 1,2,5,6-tetrakisphosphate + phosphate. The enzyme catalyses 1D-myo-inositol 1,2,5,6-tetrakisphosphate + H2O = 1D-myo-inositol 1,2,6-trisphosphate + phosphate. It catalyses the reaction 1D-myo-inositol 1,2,6-trisphosphate + H2O = 1D-myo-inositol 1,2-bisphosphate + phosphate. It carries out the reaction 1D-myo-inositol 1,2-bisphosphate + H2O = 1D-myo-inositol 2-phosphate + phosphate. The catalysed reaction is 1D-myo-inositol hexakisphosphate + H2O = 1D-myo-inositol 1,2,3,5,6-pentakisphosphate + phosphate. The enzyme catalyses 1D-myo-inositol 1,2,3,5,6-pentakisphosphate + H2O = 1D-myo-inositol 1,2,3,6-tetrakisphosphate + phosphate. It catalyses the reaction 1D-myo-inositol 1,2,3,6-tetrakisphosphate + H2O = 1D-myo-inositol 1,2,3-trisphosphate + phosphate. It carries out the reaction 1D-myo-inositol 1,2,3-trisphosphate + H2O = 1D-myo-inositol 2,3-bisphosphate + phosphate. The catalysed reaction is 1D-myo-inositol 2,3-bisphosphate + H2O = 1D-myo-inositol 2-phosphate + phosphate. The enzyme catalyses 1D-myo-inositol 1,3,4,5,6-pentakisphosphate + H2O = 1D-myo-inositol 1,4,5,6-tetrakisphosphate + phosphate. It catalyses the reaction 1D-myo-inositol 1,4,5,6-tetrakisphosphate + H2O = 1D-myo-inositol 1,4,5-trisphosphate + phosphate. It carries out the reaction (2R)-2,3-bisphosphoglycerate + H2O = (2R)-2-phosphoglycerate + phosphate. Multiple inositol polyphosphate phosphatase that hydrolyzes 1D-myo-inositol 1,3,4,5,6-pentakisphosphate (InsP5[2OH]) and 1D-myo-inositol hexakisphosphate (InsP6) to a range of less phosphorylated inositol phosphates. This regulates the availability of these various small molecule second messengers and metal chelators which control many aspects of cell physiology. Has a weak in vitro activity towards 1D-myo-inositol 1,4,5-trisphosphate which is unlikely to be physiologically relevant. By regulating intracellular inositol polyphosphates pools, which act as metal chelators, it may control the availability of intracellular calcium and iron, which are important for proper neuronal development and homeostasis. May have a dual substrate specificity, and function as a 2,3-bisphosphoglycerate 3-phosphatase hydrolyzing 2,3-bisphosphoglycerate to 2-phosphoglycerate. 2,3-bisphosphoglycerate (BPG) is formed as part of the Rapoport-Luebering glycolytic bypass and is a regulator of systemic oxygen homeostasis as the major allosteric effector of hemoglobin. The sequence is that of Multiple inositol polyphosphate phosphatase 1 from Homo sapiens (Human).